The sequence spans 971 residues: Nuclear factor NF-kappa-B p110 subunit (971 aa).

Positions 23 to 41 (STSGYSSSTSPNSTNRSFS) are enriched in low complexity. The disordered stretch occupies residues 23–46 (STSGYSSSTSPNSTNRSFSPAHSP). The RHD domain occupies 147 to 339 (KHVPQLRIVE…NAINNRKSAQ (193 aa)). Ser431 carries the phosphoserine; by PKA modification. The Nuclear localization signal signature appears at 452–457 (SRKRRR). A disordered region spans residues 453-496 (RKRRRTGSSANSSSSGTESSNNSLDLPKTLGLAQPPNGLPNLSQ). A compositionally biased stretch (low complexity) spans 460–475 (SSANSSSSGTESSNNS). A Phosphothreonine modification is found at Thr620. Tyr626 carries the post-translational modification Phosphotyrosine. 5 ANK repeats span residues 640-669 (DGDS…NPNL), 673-702 (AGNT…TVQL), 710-740 (DGLT…SISV), 745-775 (DGNN…NLTD), and 783-812 (AGHT…EKGE). A disordered region spans residues 826 to 877 (IDSSSDESSDAGQLEIKSEEMDIETKDEDSVELDLSSGPRRQKDESSRDTEM). Over residues 866-877 (RQKDESSRDTEM) the composition is skewed to basic and acidic residues. Phosphoserine is present on Ser950.

In terms of assembly, rel-p68 subunit interacts with Dredd. Interacts with DMAP1. Interacts with akirin; interaction is immune stimulation-dependent; activates selected rel target gene promoters. Phosphorylated by lipopolysaccharide (LPS)-activated I-kappa-B kinase complex before being cleaved. Rel-p110 subunit is cleaved within seconds of an immune challenge into Rel-p49 subunit and Rel-p68 subunit. Rel-p110 subunit reappears after 45 minutes.

It is found in the nucleus. The protein resides in the cytoplasm. Transcription factor that plays a key role in the humoral immune response as part of the peptidoglycan recognition protein (IMD) signaling pathway. Rel-p68 subunit translocates to the nucleus where it binds to the promoter of the Cecropin A1 gene and probably other antimicrobial peptide genes. I-kappa-B kinase complex (IKKbeta and key) and PGRP-LC are essential signaling components in transmitting the lipopolysaccharide (LPS) signal leading to cact degradation for NF-kappa-B (rel) activation. Part of a Toll-related receptor pathway that functions in the apoptosis of unfit cells during cell competition. Also part of some antiviral immunity: activated downstream of Sting signaling, which detects double-stranded RNA (dsRNA) from viruses, and promotes expression of antiviral effector genes. May be part of a NF-kappa-B and Tollo signaling cascade that regulates development of the peripheral nervous system. Possibly post-transcriptionally regulates the neuron-specific genes sc and ase, by promoting the rapid turnover of their transcripts in the wing imaginal disk. The sequence is that of Nuclear factor NF-kappa-B p110 subunit from Drosophila melanogaster (Fruit fly).